A 490-amino-acid chain; its full sequence is MLPLVLFILLAATLLFWKWQGNHWRRLGLEAPFGWPLVGNMLDFALGRRSYGEIYQEIYTRNPGLKYVGFYRLFNEPAILVRDQELLRQILVGRNFADCADNAVYVDHQRDVLASHNPFIANGDRWRVLRADLVPLFTPSRVRQTLPHVARACQLLRDQVPLGRFEAKDLATRYTLQVVASAIFGLDAHCLGIHMRVAHEPSRWLEWLAPLFQPSVWSLLETMSLLHTPRLGRLIGHRYVPLPLQHWFRELVEARSGGDNLLQWLAESKRGLGKEELAGHATTLLLEGYETSAMLLAFALYELALNEDAQRRLHIELDEVAQRHAGNLIDPVALGELRYSEAALLEALRLHPAMQALQKRCTKTFTLPDQKSGASSELKVHLGTVLVLPVQAIHLDPALYPAPNQFRPERFLNQPPMGCRFLGFGAGPRMCPGMRLGLLQTKAALTTLLQDHCVQLADEDQCRVEVSPLTFLTASRNGIWLSFKRRTRRY.

Cys431 is a heme binding site.

This sequence belongs to the cytochrome P450 family. Heme is required as a cofactor.

The protein localises to the endoplasmic reticulum membrane. The protein resides in the microsome membrane. Its function is as follows. May be involved in the metabolism of insect hormones and in the breakdown of synthetic insecticides. The sequence is that of Probable cytochrome P450 308a1 (Cyp308a1) from Drosophila melanogaster (Fruit fly).